A 622-amino-acid chain; its full sequence is Dopamine beta-hydroxylase (622 aa).

The Cytoplasmic segment spans residues 1–20 (MQAHLSHQPCWSSLPSPSVR). A helical; Signal-anchor for type II membrane protein membrane pass occupies residues 21 to 41 (EAASMYGTAVAIFLVILVAAL). The Intragranular segment spans residues 42-621 (RGSEPPESPF…TVPITTEADA (580 aa)). A DOMON domain is found at 61–177 (GILELSWNVS…DTVHLVYGIL (117 aa)). Residues Asn-68 and Asn-188 are each glycosylated (N-linked (GlcNAc...) asparagine). Intrachain disulfides connect Cys-158–Cys-600, Cys-236–Cys-287, Cys-273–Cys-299, Cys-394–Cys-507, Cys-398–Cys-569, and Cys-470–Cys-492. The active site involves Tyr-234. Cu(2+)-binding residues include His-266 and His-267. His-337 lines the Cu(2+) pocket. Ser-350 carries the post-translational modification Phosphoserine; by CaMK. Residue His-416 is part of the active site. Cu(2+)-binding residues include His-416 and His-418. A glycan (N-linked (GlcNAc...) asparagine) is linked at Asn-476. Residue Met-491 participates in Cu(2+) binding. A glycan (N-linked (GlcNAc...) asparagine) is linked at Asn-570. The segment at 594 to 622 (EEPTPRCPIRQTQSPANPTVPITTEADAE) is disordered. Positions 603 to 615 (RQTQSPANPTVPI) are enriched in polar residues.

It belongs to the copper type II ascorbate-dependent monooxygenase family. Homotetramer; composed of two disulfide-linked dimers. It depends on Cu(2+) as a cofactor. In terms of processing, proteolytic cleavage after the membrane-anchor leads to the release of the soluble form. Post-translationally, N-glycosylated. Detected in adrenal gland secretory granules (at protein level). Detected in adrenal gland.

The protein localises to the cytoplasmic vesicle. It localises to the secretory vesicle lumen. Its subcellular location is the secretory vesicle. The protein resides in the chromaffin granule lumen. It is found in the secretory vesicle membrane. The protein localises to the chromaffin granule membrane. It catalyses the reaction dopamine + 2 L-ascorbate + O2 = (R)-noradrenaline + 2 monodehydro-L-ascorbate radical + H2O. Its pathway is catecholamine biosynthesis; (R)-noradrenaline biosynthesis; (R)-noradrenaline from dopamine: step 1/1. Catalyzes the hydroxylation of dopamine to noradrenaline (also known as norepinephrine), and is thus vital for regulation of these neurotransmitters. This is Dopamine beta-hydroxylase (Dbh) from Mus musculus (Mouse).